Consider the following 579-residue polypeptide: UPF0324 membrane protein DVU_0943 (579 aa).

10 helical membrane passes run 26–45 (YWAIWLGFVILIAGMWLFLA), 193–215 (AFNISTSLPMLMVVMGLFFAIGM), 225–243 (FLVGFIGVFVVAVIAQMMG), 250–272 (YWGIGTEAWAIIIGMLIANTVGT), 305–327 (IGIPGIFVAWVVTPIVLICTFIF), 369–391 (LTLSIGLSLVFTAIMMIVMPAFI), 430–452 (AATIKMIQNVLIGVVAFGVAVYW), 473–495 (FPKFVLGFLTASIIFSIISGSLG), 515–533 (LRGWFFCLAFTAIGLATNF), and 546–568 (LILYVCGQSFNLVLTLTMAYIMF).

The protein belongs to the UPF0324 family.

The protein resides in the cell membrane. The polypeptide is UPF0324 membrane protein DVU_0943 (Nitratidesulfovibrio vulgaris (strain ATCC 29579 / DSM 644 / CCUG 34227 / NCIMB 8303 / VKM B-1760 / Hildenborough) (Desulfovibrio vulgaris)).